The chain runs to 478 residues: Phenylalanine--tRNA ligase alpha subunit (478 aa).

Residues T318, 357–359 (QLE), and Y397 each bind L-phenylalanine. Position 399 (E399) interacts with Mg(2+). Residue F422 participates in L-phenylalanine binding.

Belongs to the class-II aminoacyl-tRNA synthetase family. Phe-tRNA synthetase alpha subunit type 2 subfamily. Tetramer of two alpha and two beta subunits. It depends on Mg(2+) as a cofactor.

The protein resides in the cytoplasm. It catalyses the reaction tRNA(Phe) + L-phenylalanine + ATP = L-phenylalanyl-tRNA(Phe) + AMP + diphosphate + H(+). The polypeptide is Phenylalanine--tRNA ligase alpha subunit (Methanospirillum hungatei JF-1 (strain ATCC 27890 / DSM 864 / NBRC 100397 / JF-1)).